The following is a 347-amino-acid chain: Eukaryotic translation initiation factor 3 subunit H (347 aa).

Residues 1–142 (MKIMKHCSQT…LRAFRLSPRF (142 aa)) form the MPN domain.

Belongs to the eIF-3 subunit H family. Component of the eukaryotic translation initiation factor 3 (eIF-3) complex.

It localises to the cytoplasm. Its function is as follows. Component of the eukaryotic translation initiation factor 3 (eIF-3) complex, which is involved in protein synthesis of a specialized repertoire of mRNAs and, together with other initiation factors, stimulates binding of mRNA and methionyl-tRNAi to the 40S ribosome. The eIF-3 complex specifically targets and initiates translation of a subset of mRNAs involved in cell proliferation. The protein is Eukaryotic translation initiation factor 3 subunit H of Neosartorya fischeri (strain ATCC 1020 / DSM 3700 / CBS 544.65 / FGSC A1164 / JCM 1740 / NRRL 181 / WB 181) (Aspergillus fischerianus).